The chain runs to 654 residues: MSNLILTPSNNGTERPYRSRKTRPCDNCRLRKSRCVVESIGNPCLLCTQLKIPCTYHLPPIKRNKQKKQQDSVSDDTPSEATTTTNDDRDPKYNALGNNLDAVRGKVISPTQGSDARGPDGRQVPLNLAGITEMYHTSDDKFDKLGLDDSLNYPYVLGPTCDSDIDLIREYFSFENGVCSFDNMTVKYVSTSSKSPVMYILDPAYENDRHSDFSRYDHALHDLLSTYIDEATGRTLVNLYFSHVHPSYPILHGPRFLLSYKNGSRNVPSILLAALYSVALTYWPSDSRSFGAPPLDQRKMWTIVEEGLNFHFTQPRLSTIQAALLYLISRPLHNMYSLSSILSRTTVLSQLLGFNHDCTEWKIPNEEKTIRKRIWWAIFIADKWYSMYFGLATNIHEDDFVVPKIESDESLPLEITSSHSFKTFLKMIELSSLLQDILQDLFTVRALTRHSKNNRSISYQIIGFFTRLNSIRPVEFTEPALGVASLKIQFDAVEILLWKTALRFNLPDFQSADDLFVCVEKSVSNFVQITANSSGDFFWPYAGFHFSTLVSLLIRLHLDFHTNNTYGARAFSLLDAFVRHCITLHEAGFDFVEMAIRRSSSLLKELGKDHPHLLALRDDIFNSNDSRGEEAYNHVPEQLFDPWNPHSWTFPKSD.

The segment covering 1-13 (MSNLILTPSNNGT) has biased composition (polar residues). The disordered stretch occupies residues 1–23 (MSNLILTPSNNGTERPYRSRKTR). The segment at residues 25–54 (CDNCRLRKSRCVVESIGNPCLLCTQLKIPC) is a DNA-binding region (zn(2)-C6 fungal-type). Positions 63 to 96 (RNKQKKQQDSVSDDTPSEATTTTNDDRDPKYNAL) are disordered.

Its subcellular location is the cytoplasm. It is found in the nucleus. This is an uncharacterized protein from Schizosaccharomyces pombe (strain 972 / ATCC 24843) (Fission yeast).